The sequence spans 447 residues: Phosphoglucosamine mutase (447 aa).

Catalysis depends on S106, which acts as the Phosphoserine intermediate. Residues S106, D245, D247, and D249 each contribute to the Mg(2+) site. S106 is modified (phosphoserine).

This sequence belongs to the phosphohexose mutase family. Mg(2+) is required as a cofactor. Activated by phosphorylation.

The catalysed reaction is alpha-D-glucosamine 1-phosphate = D-glucosamine 6-phosphate. Functionally, catalyzes the conversion of glucosamine-6-phosphate to glucosamine-1-phosphate. The chain is Phosphoglucosamine mutase from Cupriavidus pinatubonensis (strain JMP 134 / LMG 1197) (Cupriavidus necator (strain JMP 134)).